A 189-amino-acid chain; its full sequence is Mediator of RNA polymerase II transcription subunit 21 (189 aa).

The disordered stretch occupies residues 50-102 (KIPKNSTAPPVPAGAPVPSQSSPPPPQTQRGASEAAADPNLPPAPDSPRTFAS). Positions 58-76 (PPVPAGAPVPSQSSPPPPQ) are enriched in pro residues. A coiled-coil region spans residues 127–170 (GIDSSEAEQEKRIRELEAELRGVEEEREAKIRELRTLGRTLERV).

It belongs to the Mediator complex subunit 21 family. Component of the Mediator complex.

It localises to the nucleus. In terms of biological role, component of the Mediator complex, a coactivator involved in the regulated transcription of nearly all RNA polymerase II-dependent genes. Mediator functions as a bridge to convey information from gene-specific regulatory proteins to the basal RNA polymerase II transcription machinery. Mediator is recruited to promoters by direct interactions with regulatory proteins and serves as a scaffold for the assembly of a functional preinitiation complex with RNA polymerase II and the general transcription factors. The polypeptide is Mediator of RNA polymerase II transcription subunit 21 (srb7) (Aspergillus clavatus (strain ATCC 1007 / CBS 513.65 / DSM 816 / NCTC 3887 / NRRL 1 / QM 1276 / 107)).